Consider the following 466-residue polypeptide: 3-isopropylmalate dehydratase large subunit (466 aa).

[4Fe-4S] cluster contacts are provided by cysteine 347, cysteine 407, and cysteine 410.

This sequence belongs to the aconitase/IPM isomerase family. LeuC type 1 subfamily. Heterodimer of LeuC and LeuD. [4Fe-4S] cluster serves as cofactor.

The enzyme catalyses (2R,3S)-3-isopropylmalate = (2S)-2-isopropylmalate. It functions in the pathway amino-acid biosynthesis; L-leucine biosynthesis; L-leucine from 3-methyl-2-oxobutanoate: step 2/4. In terms of biological role, catalyzes the isomerization between 2-isopropylmalate and 3-isopropylmalate, via the formation of 2-isopropylmaleate. The polypeptide is 3-isopropylmalate dehydratase large subunit (Shewanella woodyi (strain ATCC 51908 / MS32)).